We begin with the raw amino-acid sequence, 200 residues long: Ribosome maturation factor RimP (200 aa).

The protein belongs to the RimP family.

Its subcellular location is the cytoplasm. Functionally, required for maturation of 30S ribosomal subunits. The protein is Ribosome maturation factor RimP of Polaromonas sp. (strain JS666 / ATCC BAA-500).